The primary structure comprises 346 residues: Heat-inducible transcription repressor HrcA (346 aa).

The protein belongs to the HrcA family.

Functionally, negative regulator of class I heat shock genes (grpE-dnaK-dnaJ and groELS operons). Prevents heat-shock induction of these operons. This Fructilactobacillus sanfranciscensis (Lactobacillus sanfranciscensis) protein is Heat-inducible transcription repressor HrcA.